The chain runs to 164 residues: UPF0114 protein YqhA (164 aa).

3 helical membrane-spanning segments follow: residues 15 to 35 (LLAPVYFGLSLALIALALKFF), 53 to 73 (LILVLLSLVDMTLVGGLLVMV), and 136 to 156 (LMWYVIIHLTFVLSAFVMGYL).

The protein belongs to the UPF0114 family.

It is found in the cell membrane. This chain is UPF0114 protein YqhA, found in Salmonella dublin (strain CT_02021853).